Consider the following 287-residue polypeptide: AA9 family lytic polysaccharide monooxygenase D (287 aa).

The N-terminal stretch at 1-17 is a signal peptide; it reads MKLSLLAAAAIAPMVSA. H18 is a binding site for Cu(2+). Cysteines 67 and 189 form a disulfide. H176 contacts O2. Y186 serves as a coordination point for Cu(2+). N220 and N250 each carry an N-linked (GlcNAc...) asparagine glycan. A disordered region spans residues 239-287; the sequence is TGGSGSSTGSYNESNAEDSNEYPYQKESGTCQSNFYRREHARDFSHRRA. Over residues 274–287 the composition is skewed to basic and acidic residues; sequence YRREHARDFSHRRA.

The protein belongs to the polysaccharide monooxygenase AA9 family. The cofactor is Cu(2+).

Its subcellular location is the secreted. The catalysed reaction is [(1-&gt;4)-beta-D-glucosyl]n+m + reduced acceptor + O2 = 4-dehydro-beta-D-glucosyl-[(1-&gt;4)-beta-D-glucosyl]n-1 + [(1-&gt;4)-beta-D-glucosyl]m + acceptor + H2O.. Lytic polysaccharide monooxygenase (LPMO) that depolymerizes crystalline and amorphous polysaccharides via the oxidation of scissile alpha- or beta-(1-4)-glycosidic bonds, yielding C1 oxidation products. Catalysis by LPMOs requires the reduction of the active-site copper from Cu(II) to Cu(I) by a reducing agent and H(2)O(2) or O(2) as a cosubstrate. Active on celluloseas as well as on the hemicellulose xyloglucan. Shows synergy with other hydrolases in degrading sorghum stover. The protein is AA9 family lytic polysaccharide monooxygenase D of Emericella nidulans (strain FGSC A4 / ATCC 38163 / CBS 112.46 / NRRL 194 / M139) (Aspergillus nidulans).